Reading from the N-terminus, the 360-residue chain is tRNA/tmRNA (uracil-C(5))-methyltransferase (360 aa).

Positions 185, 213, 218, 234, and 294 each coordinate S-adenosyl-L-methionine. Catalysis depends on Cys319, which acts as the Nucleophile. Catalysis depends on Glu353, which acts as the Proton acceptor.

Belongs to the class I-like SAM-binding methyltransferase superfamily. RNA M5U methyltransferase family. TrmA subfamily.

It carries out the reaction uridine(54) in tRNA + S-adenosyl-L-methionine = 5-methyluridine(54) in tRNA + S-adenosyl-L-homocysteine + H(+). It catalyses the reaction uridine(341) in tmRNA + S-adenosyl-L-methionine = 5-methyluridine(341) in tmRNA + S-adenosyl-L-homocysteine + H(+). In terms of biological role, dual-specificity methyltransferase that catalyzes the formation of 5-methyluridine at position 54 (m5U54) in all tRNAs, and that of position 341 (m5U341) in tmRNA (transfer-mRNA). This Nitratiruptor sp. (strain SB155-2) protein is tRNA/tmRNA (uracil-C(5))-methyltransferase.